The sequence spans 80 residues: Small ribosomal subunit protein bS16 (80 aa).

Belongs to the bacterial ribosomal protein bS16 family.

The chain is Small ribosomal subunit protein bS16 from Hydrogenovibrio crunogenus (strain DSM 25203 / XCL-2) (Thiomicrospira crunogena).